Here is a 300-residue protein sequence, read N- to C-terminus: Acetylglutamate kinase (300 aa).

Substrate contacts are provided by residues 73-74 (GG), Arg95, and Asn197.

This sequence belongs to the acetylglutamate kinase family. ArgB subfamily.

The protein resides in the cytoplasm. The catalysed reaction is N-acetyl-L-glutamate + ATP = N-acetyl-L-glutamyl 5-phosphate + ADP. The protein operates within amino-acid biosynthesis; L-arginine biosynthesis; N(2)-acetyl-L-ornithine from L-glutamate: step 2/4. In terms of biological role, catalyzes the ATP-dependent phosphorylation of N-acetyl-L-glutamate. The sequence is that of Acetylglutamate kinase from Bordetella petrii (strain ATCC BAA-461 / DSM 12804 / CCUG 43448).